Reading from the N-terminus, the 436-residue chain is Anaerobic glycerol-3-phosphate dehydrogenase subunit B (436 aa).

It belongs to the anaerobic G-3-P dehydrogenase subunit B family. As to quaternary structure, composed of a catalytic GlpA/B dimer and of membrane bound GlpC. FMN is required as a cofactor.

It catalyses the reaction a quinone + sn-glycerol 3-phosphate = dihydroxyacetone phosphate + a quinol. It participates in polyol metabolism; glycerol degradation via glycerol kinase pathway; glycerone phosphate from sn-glycerol 3-phosphate (anaerobic route): step 1/1. In terms of biological role, conversion of glycerol 3-phosphate to dihydroxyacetone. Uses fumarate or nitrate as electron acceptor. This chain is Anaerobic glycerol-3-phosphate dehydrogenase subunit B, found in Vibrio cholerae serotype O1 (strain M66-2).